The sequence spans 652 residues: MNWVGGSRSRVLIKQERRKQKEYFEKHRLKSKMKSLGVLSPVKNSAVSLDILNLYMVNQISCKKKIPETVRKPTHVNMNRDIKMPLRKHNLELTMSPHCVPSKLCLDDTETNVNCQRLSSKEDLGPVQSQGMDSYSMLHPQFSKIENCSFTPSSFSVELPSNRHISKLNFTSGIAPTPQKLAYEKKQNDQRSTVNCSDSLLSKLNKSQDVFSPSHKTTRFGTLFERLNSLGNRNLLTKSPAVIMDEDCRSTDEIRQSDYITEKHSIQHIWGKNGKEVSNFLEDVNQSTPNLLSENCDSFVSQNMINVLNIDEQRIKKTFNKCDYDSMGDTCVVTSSDKNHVTDRCIRNIFTVPELTFSNSTLNKTSYPEKCQPNKKYQREYNKNERNDLSTSFENDYYPSSSERKEKFENDYQEKTPQKSIQKYPANSMGNIPSEELHSKQSWDFGLDEILMEEGGIYSLKSKRISTKKISLDSAQSSRSTSYSPRPTDSCFSSSSDLPSEDEDQISQQIEDSNRMTIKTKEKMNNFYVERMAKLSGDRIVKNDDKIHKQNENFYQFSVKNNTDQFPQLQCNSAHILQNKTNDNCVLQAARCDAGIQTESESVMEEKLDVAIQCDLISKCTCRSDVSLCNLERCSGNIKADTTGGQEIHKNN.

Residues 1–231 constitute a DNA-binding region (binds DNA containing a D-loop); it reads MNWVGGSRSR…TLFERLNSLG (231 aa). Disordered regions lie at residues 363 to 434 and 469 to 506; these read NKTS…NIPS and KISLDSAQSSRSTSYSPRPTDSCFSSSSDLPSEDEDQI. Positions 377 to 388 are enriched in basic and acidic residues; it reads YQREYNKNERND. Over residues 389–401 the composition is skewed to polar residues; sequence LSTSFENDYYPSS. Basic and acidic residues predominate over residues 402–417; that stretch reads SERKEKFENDYQEKTP. The span at 473–498 shows a compositional bias: low complexity; the sequence is DSAQSSRSTSYSPRPTDSCFSSSSDL.

As to quaternary structure, interacts with MSH5. Interacts with TEX11.

The protein localises to the chromosome. Its function is as follows. Involved in recombination, probably acting by stabilizing recombination intermediates during meiotic crossover formation. Required for normal germline development and fertility. Required for meiotic progression, complete chromosomal synapsis and crossover formation. Binds double-stranded DNA. However, also binds branched DNA molecules, such as those containing a D-loop or Holliday junction structure. Probably not required for formation of DNA double-strand breaks (DSBs). Also binds RNA in an RNA structure-independent manner, with a preference for binding 3'-UTR regions of mRNAs; may stabilize bound RNAs. This chain is Regulator of DNA class I crossover intermediates 1, found in Homo sapiens (Human).